A 174-amino-acid chain; its full sequence is Small ribosomal subunit protein uS5c (174 aa).

The 64-residue stretch at 17-80 (WEERVVQVKR…TDAKKHLVTV (64 aa)) folds into the S5 DRBM domain.

This sequence belongs to the universal ribosomal protein uS5 family. As to quaternary structure, part of the 30S ribosomal subunit. Contacts protein S4.

Its subcellular location is the plastid. The protein localises to the chloroplast. In terms of biological role, with S4 and S12 plays an important role in translational accuracy. This chain is Small ribosomal subunit protein uS5c (rps5), found in Pyropia yezoensis (Susabi-nori).